The following is a 575-amino-acid chain: Isocitrate dehydrogenase kinase/phosphatase (575 aa).

ATP contacts are provided by residues 315-321 (APGVKGM) and K336. D371 is an active-site residue.

It belongs to the AceK family.

Its subcellular location is the cytoplasm. The enzyme catalyses L-seryl-[isocitrate dehydrogenase] + ATP = O-phospho-L-seryl-[isocitrate dehydrogenase] + ADP + H(+). In terms of biological role, bifunctional enzyme which can phosphorylate or dephosphorylate isocitrate dehydrogenase (IDH) on a specific serine residue. This is a regulatory mechanism which enables bacteria to bypass the Krebs cycle via the glyoxylate shunt in response to the source of carbon. When bacteria are grown on glucose, IDH is fully active and unphosphorylated, but when grown on acetate or ethanol, the activity of IDH declines drastically concomitant with its phosphorylation. The sequence is that of Isocitrate dehydrogenase kinase/phosphatase from Yersinia pseudotuberculosis serotype O:1b (strain IP 31758).